Reading from the N-terminus, the 623-residue chain is Glutamyl-tRNA(Gln) amidotransferase subunit E (623 aa).

It belongs to the GatB/GatE family. GatE subfamily. Heterodimer of GatD and GatE.

The enzyme catalyses L-glutamyl-tRNA(Gln) + L-glutamine + ATP + H2O = L-glutaminyl-tRNA(Gln) + L-glutamate + ADP + phosphate + H(+). Allows the formation of correctly charged Gln-tRNA(Gln) through the transamidation of misacylated Glu-tRNA(Gln) in organisms which lack glutaminyl-tRNA synthetase. The reaction takes place in the presence of glutamine and ATP through an activated gamma-phospho-Glu-tRNA(Gln). The GatDE system is specific for glutamate and does not act on aspartate. The chain is Glutamyl-tRNA(Gln) amidotransferase subunit E from Haloarcula marismortui (strain ATCC 43049 / DSM 3752 / JCM 8966 / VKM B-1809) (Halobacterium marismortui).